The sequence spans 311 residues: Probable deoxyhypusine synthase (311 aa).

The Nucleophile role is filled by lysine 284.

This sequence belongs to the deoxyhypusine synthase family. NAD(+) is required as a cofactor.

The enzyme catalyses [eIF5A protein]-L-lysine + spermidine = [eIF5A protein]-deoxyhypusine + propane-1,3-diamine. It functions in the pathway protein modification; eIF5A hypusination. In terms of biological role, catalyzes the NAD-dependent oxidative cleavage of spermidine and the subsequent transfer of the butylamine moiety of spermidine to the epsilon-amino group of a specific lysine residue of the eIF-5A precursor protein to form the intermediate deoxyhypusine residue. The polypeptide is Probable deoxyhypusine synthase (Picrophilus torridus (strain ATCC 700027 / DSM 9790 / JCM 10055 / NBRC 100828 / KAW 2/3)).